Reading from the N-terminus, the 236-residue chain is 2,3,4,5-tetrahydropyridine-2,6-dicarboxylate N-acetyltransferase (236 aa).

This sequence belongs to the transferase hexapeptide repeat family. DapH subfamily.

It carries out the reaction (S)-2,3,4,5-tetrahydrodipicolinate + acetyl-CoA + H2O = L-2-acetamido-6-oxoheptanedioate + CoA. The protein operates within amino-acid biosynthesis; L-lysine biosynthesis via DAP pathway; LL-2,6-diaminopimelate from (S)-tetrahydrodipicolinate (acetylase route): step 1/3. Catalyzes the transfer of an acetyl group from acetyl-CoA to tetrahydrodipicolinate. This chain is 2,3,4,5-tetrahydropyridine-2,6-dicarboxylate N-acetyltransferase, found in Thermotoga maritima (strain ATCC 43589 / DSM 3109 / JCM 10099 / NBRC 100826 / MSB8).